The sequence spans 698 residues: Effector protein AvrPphDPgy (698 aa).

Residues 1–15 are compositionally biased toward polar residues; sequence MNPLRSIQHNITTPP. 2 disordered regions span residues 1–36 and 171–200; these read MNPL…HPKR and VDSS…DSDS. The span at 172-181 shows a compositional bias: low complexity; it reads DSSSPLLSSP.

Its subcellular location is the secreted. Its function is as follows. Effector protein involved in non-host recognition. The chain is Effector protein AvrPphDPgy (avrPphDPgy) from Pseudomonas savastanoi pv. glycinea (Pseudomonas syringae pv. glycinea).